Reading from the N-terminus, the 204-residue chain is Protein G1-like5 (204 aa).

2 disordered regions span residues 1-45 (MEFV…ESQK) and 157-204 (RARG…GAAA). Positions 26–39 (TGATSASAAGASPS) are enriched in low complexity. The 128-residue stretch at 40 to 167 (RYESQKRRDW…ARGVSYEKKK (128 aa)) folds into the ALOG domain. Residues 165-169 (KKKRK) carry the Nuclear localization signal motif.

The protein belongs to the plant homeotic and developmental regulators ALOG protein family.

The protein localises to the nucleus. Probable transcription regulator that acts as a developmental regulator by promoting cell growth in response to light. This is Protein G1-like5 (G1L5) from Oryza sativa subsp. japonica (Rice).